The chain runs to 340 residues: Glycerol-3-phosphate dehydrogenase [NAD(P)+] (340 aa).

NADPH is bound by residues Ser14, Phe15, Arg35, and Lys108. The sn-glycerol 3-phosphate site is built by Lys108 and Gly136. Ala140 contacts NADPH. 5 residues coordinate sn-glycerol 3-phosphate: Lys191, Asp244, Ser254, Arg255, and Asn256. The active-site Proton acceptor is Lys191. Residue Arg255 coordinates NADPH. Glu281 provides a ligand contact to NADPH.

This sequence belongs to the NAD-dependent glycerol-3-phosphate dehydrogenase family.

The protein localises to the cytoplasm. It catalyses the reaction sn-glycerol 3-phosphate + NAD(+) = dihydroxyacetone phosphate + NADH + H(+). The enzyme catalyses sn-glycerol 3-phosphate + NADP(+) = dihydroxyacetone phosphate + NADPH + H(+). The protein operates within membrane lipid metabolism; glycerophospholipid metabolism. Its function is as follows. Catalyzes the reduction of the glycolytic intermediate dihydroxyacetone phosphate (DHAP) to sn-glycerol 3-phosphate (G3P), the key precursor for phospholipid synthesis. The sequence is that of Glycerol-3-phosphate dehydrogenase [NAD(P)+] from Pseudomonas paraeruginosa (strain DSM 24068 / PA7) (Pseudomonas aeruginosa (strain PA7)).